A 131-amino-acid chain; its full sequence is Small ribosomal subunit protein bS6 (131 aa).

The tract at residues 98 to 131 (EASPMVKAKDERRERREDFANETSEETEAGDSEE) is disordered. Over residues 104-116 (KAKDERRERREDF) the composition is skewed to basic and acidic residues. Positions 120–131 (TSEETEAGDSEE) are enriched in acidic residues.

Belongs to the bacterial ribosomal protein bS6 family.

In terms of biological role, binds together with bS18 to 16S ribosomal RNA. This Edwardsiella ictaluri (strain 93-146) protein is Small ribosomal subunit protein bS6.